Reading from the N-terminus, the 46-residue chain is uncharacterized protein (46 aa).

This is an uncharacterized protein from Escherichia coli.